A 161-amino-acid chain; its full sequence is Ribosome maturation factor RimP (161 aa).

The protein belongs to the RimP family.

The protein resides in the cytoplasm. Required for maturation of 30S ribosomal subunits. This is Ribosome maturation factor RimP from Rickettsia rickettsii (strain Iowa).